Here is a 1023-residue protein sequence, read N- to C-terminus: 2-oxoglutarate dehydrogenase complex component E1 (1023 aa).

A mitochondrion-targeting transit peptide spans 1–40 (MFHLRTCAAKLRPLTASQTVKTFSQNRPAAARTFQQIRCY). K74 carries the N6-succinyllysine modification. A Phosphoserine modification is found at S100. Positions 143, 156, and 158 each coordinate Ca(2+). R312 is a thiamine diphosphate binding site. K401 is subject to N6-acetyllysine. Thiamine diphosphate is bound by residues D411, N444, and I446. Residues D411, N444, and I446 each coordinate Mg(2+). K534 is covalently cross-linked (Glycyl lysine isopeptide (Lys-Gly) (interchain with G-Cter in ubiquitin)). Position 564 is an N6-succinyllysine (K564). Thiamine diphosphate is bound at residue Q676. K970 is subject to N6-acetyllysine.

It belongs to the alpha-ketoglutarate dehydrogenase family. In terms of assembly, homodimer. The 2-oxoglutarate dehydrogenase complex is composed of OGDH (2-oxoglutarate dehydrogenase; E1), DLST (dihydrolipoamide succinyltransferase; E2), DLD (dihydrolipoamide dehydrogenase; E3), and the assembly factor KGD4. It contains multiple copies of the three enzymatic components (E1, E2 and E3). In the nucleus, the 2-oxoglutarate dehydrogenase complex associates with KAT2A. Interacts with ABHD11; this interaction maintains the functional lipoylation of the 2-oxoglutarate dehydrogenase complex. It depends on thiamine diphosphate as a cofactor. Requires Mg(2+) as cofactor.

The protein resides in the mitochondrion. Its subcellular location is the nucleus. The catalysed reaction is N(6)-[(R)-lipoyl]-L-lysyl-[protein] + 2-oxoglutarate + H(+) = N(6)-[(R)-S(8)-succinyldihydrolipoyl]-L-lysyl-[protein] + CO2. With respect to regulation, calcium ions and ADP stimulate, whereas ATP and NADH reduce catalytic activity. In terms of biological role, 2-oxoglutarate dehydrogenase (E1o) component of the 2-oxoglutarate dehydrogenase complex (OGDHC). Participates in the first step, rate limiting for the overall conversion of 2-oxoglutarate to succinyl-CoA and CO(2) catalyzed by the whole OGDHC. Catalyzes the irreversible decarboxylation of 2-oxoglutarate (alpha-ketoglutarate) via the thiamine diphosphate (ThDP) cofactor and subsequent transfer of the decarboxylated acyl intermediate on an oxidized dihydrolipoyl group that is covalently amidated to the E2 enzyme (dihydrolipoyllysine-residue succinyltransferase or DLST). Plays a key role in the Krebs (citric acid) cycle, which is a common pathway for oxidation of fuel molecules, including carbohydrates, fatty acids, and amino acids. Can catalyze the decarboxylation of 2-oxoadipate in vitro, but at a much lower rate than 2-oxoglutarate. Mainly active in the mitochondrion. A fraction of the 2-oxoglutarate dehydrogenase complex also localizes in the nucleus and is required for lysine succinylation of histones: associates with KAT2A on chromatin and provides succinyl-CoA to histone succinyltransferase KAT2A. The polypeptide is 2-oxoglutarate dehydrogenase complex component E1 (Homo sapiens (Human)).